The following is a 49-amino-acid chain: Protein OPG059 (49 aa).

Position 1 (methionine 1) is a topological domain, virion surface. A helical membrane pass occupies residues 2 to 22 (VIGLVIFVSVAAAIVGVLSNV). Residues 23–49 (LDMLMYVEENNEEDARIKEEQELLLLY) lie on the Intravirion side of the membrane.

The protein belongs to the orthopoxvirus OPG058 family.

Its subcellular location is the virion membrane. It localises to the host membrane. Functionally, may play a role in cell adhesion and is important for virus virulence in vivo, although it is not required for the virus life cycle in cell cultures. In Vaccinia virus (strain Western Reserve) (VACV), this protein is Protein OPG059 (OPG059).